Consider the following 185-residue polypeptide: Ribosome-recycling factor (185 aa).

It belongs to the RRF family.

It is found in the cytoplasm. Its function is as follows. Responsible for the release of ribosomes from messenger RNA at the termination of protein biosynthesis. May increase the efficiency of translation by recycling ribosomes from one round of translation to another. This chain is Ribosome-recycling factor, found in Arthrobacter sp. (strain FB24).